A 184-amino-acid polypeptide reads, in one-letter code: Large ribosomal subunit protein uL6 (184 aa).

This sequence belongs to the universal ribosomal protein uL6 family. In terms of assembly, part of the 50S ribosomal subunit.

Functionally, this protein binds to the 23S rRNA, and is important in its secondary structure. It is located near the subunit interface in the base of the L7/L12 stalk, and near the tRNA binding site of the peptidyltransferase center. The protein is Large ribosomal subunit protein uL6 of Thermotoga neapolitana (strain ATCC 49049 / DSM 4359 / NBRC 107923 / NS-E).